The primary structure comprises 86 residues: Small ribosomal subunit protein bS18 (86 aa).

This sequence belongs to the bacterial ribosomal protein bS18 family. As to quaternary structure, part of the 30S ribosomal subunit. Forms a tight heterodimer with protein bS6.

Functionally, binds as a heterodimer with protein bS6 to the central domain of the 16S rRNA, where it helps stabilize the platform of the 30S subunit. The sequence is that of Small ribosomal subunit protein bS18 from Campylobacter curvus (strain 525.92).